A 126-amino-acid chain; its full sequence is Ribosome-binding factor A (126 aa).

Belongs to the RbfA family. Monomer. Binds 30S ribosomal subunits, but not 50S ribosomal subunits or 70S ribosomes.

The protein resides in the cytoplasm. In terms of biological role, one of several proteins that assist in the late maturation steps of the functional core of the 30S ribosomal subunit. Associates with free 30S ribosomal subunits (but not with 30S subunits that are part of 70S ribosomes or polysomes). Required for efficient processing of 16S rRNA. May interact with the 5'-terminal helix region of 16S rRNA. The protein is Ribosome-binding factor A of Halorhodospira halophila (strain DSM 244 / SL1) (Ectothiorhodospira halophila (strain DSM 244 / SL1)).